We begin with the raw amino-acid sequence, 198 residues long: Armadillo repeat-containing protein 7 (198 aa).

2 ARM repeats span residues 57-99 (QVLD…HAGG) and 100-140 (VPLI…TATP). Serine 169 is modified (phosphoserine).

Component of the minor spliceosome. Within this complex, interacts with RBM48.

In terms of biological role, as a component of the minor spliceosome, involved in the splicing of U12-type introns in pre-mRNAs. In Homo sapiens (Human), this protein is Armadillo repeat-containing protein 7 (ARMC7).